We begin with the raw amino-acid sequence, 285 residues long: Nucleotide-binding protein HI_1146 (285 aa).

8 to 15 lines the ATP pocket; that stretch reads GRSGAGKS. 56–59 serves as a coordination point for GTP; that stretch reads DIRN.

This sequence belongs to the RapZ-like family.

Displays ATPase and GTPase activities. The chain is Nucleotide-binding protein HI_1146 from Haemophilus influenzae (strain ATCC 51907 / DSM 11121 / KW20 / Rd).